Here is a 229-residue protein sequence, read N- to C-terminus: Octanoyltransferase (229 aa).

Residues 47 to 225 enclose the BPL/LPL catalytic domain; the sequence is PSSPEAVWIL…SLAARFHLAW (179 aa). Substrate is bound by residues 89 to 96, 156 to 158, and 169 to 171; these read RGGEVTHH, AIG, and GLA. Residue cysteine 187 is the Acyl-thioester intermediate of the active site.

The protein belongs to the LipB family.

Its subcellular location is the cytoplasm. It carries out the reaction octanoyl-[ACP] + L-lysyl-[protein] = N(6)-octanoyl-L-lysyl-[protein] + holo-[ACP] + H(+). It participates in protein modification; protein lipoylation via endogenous pathway; protein N(6)-(lipoyl)lysine from octanoyl-[acyl-carrier-protein]: step 1/2. In terms of biological role, catalyzes the transfer of endogenously produced octanoic acid from octanoyl-acyl-carrier-protein onto the lipoyl domains of lipoate-dependent enzymes. Lipoyl-ACP can also act as a substrate although octanoyl-ACP is likely to be the physiological substrate. The sequence is that of Octanoyltransferase from Synechococcus sp. (strain CC9902).